The sequence spans 288 residues: Probable coatomer subunit epsilon (288 aa).

Position 262 is a phosphoserine (serine 262).

It belongs to the COPE family. Oligomeric complex that consists of at least the alpha, beta, beta', gamma, delta, epsilon and zeta subunits.

It localises to the cytoplasm. The protein resides in the golgi apparatus membrane. The protein localises to the cytoplasmic vesicle. Its subcellular location is the COPI-coated vesicle membrane. In terms of biological role, the coatomer is a cytosolic protein complex that binds to dilysine motifs and reversibly associates with Golgi non-clathrin-coated vesicles, which further mediate biosynthetic protein transport from the ER, via the Golgi up to the trans Golgi network. The coatomer complex is required for budding from Golgi membranes, and is essential for the retrograde Golgi-to-ER transport of dilysine-tagged proteins. The polypeptide is Probable coatomer subunit epsilon (sec28) (Schizosaccharomyces pombe (strain 972 / ATCC 24843) (Fission yeast)).